The chain runs to 122 residues: MSLLDTGARYQPVLVYPEELVIDADGNKKTQPSKTPIQAIARFQVANQSGTSARRAEQDNGGFTTEKVYRMRFPRSFTKEHGILGAQTQIEWKGQRWALFGDATEYDSSPALARVDYTIKRF.

The sequence is that of Gene 20 protein (20) from Mycobacterium phage D29 (Mycobacteriophage D29).